The chain runs to 248 residues: Probable transcriptional regulatory protein Mrad2831_3553 (248 aa).

This sequence belongs to the TACO1 family.

It is found in the cytoplasm. The polypeptide is Probable transcriptional regulatory protein Mrad2831_3553 (Methylobacterium radiotolerans (strain ATCC 27329 / DSM 1819 / JCM 2831 / NBRC 15690 / NCIMB 10815 / 0-1)).